A 274-amino-acid chain; its full sequence is MAIVKCKPTSPGRRFVVKVVNEDLHKGAPYAPLLEAKAKNGGRNNNGRITTRHKGGGHKQKYRVIDFRRNKDGIAGVVERLEYDPNRTAHIALVKYLDGERRYILAPKGLKAEDRIQSGEDAPIKLGNALPLRNIPLGSTIHNVEMKPGKGGQIARSAGTSVQLLAKDGQYVTLRLRSGEMRKVHADCKATIGEVSNSEHSLRSLGKAGAKRWRGVRPTVRGAAMNPVDHPHGGGEGRSSGGRHPVTPWGVPTKGYKTRTNKRTTKMIVRDRRK.

Disordered stretches follow at residues 37–59 and 222–262; these read KAKN…GGHK and GAAM…RTNK. The segment covering 50–59 has biased composition (basic residues); it reads TTRHKGGGHK.

The protein belongs to the universal ribosomal protein uL2 family. In terms of assembly, part of the 50S ribosomal subunit. Forms a bridge to the 30S subunit in the 70S ribosome.

Functionally, one of the primary rRNA binding proteins. Required for association of the 30S and 50S subunits to form the 70S ribosome, for tRNA binding and peptide bond formation. It has been suggested to have peptidyltransferase activity; this is somewhat controversial. Makes several contacts with the 16S rRNA in the 70S ribosome. This Alcanivorax borkumensis (strain ATCC 700651 / DSM 11573 / NCIMB 13689 / SK2) protein is Large ribosomal subunit protein uL2.